A 131-amino-acid polypeptide reads, in one-letter code: Large-conductance mechanosensitive channel (131 aa).

Helical transmembrane passes span 14–34 and 67–87; these read VIDL…VTSL and GSFI…FIFI.

It belongs to the MscL family. Homopentamer.

It is found in the cell membrane. In terms of biological role, channel that opens in response to stretch forces in the membrane lipid bilayer. May participate in the regulation of osmotic pressure changes within the cell. This chain is Large-conductance mechanosensitive channel, found in Bacillus pumilus (strain SAFR-032).